We begin with the raw amino-acid sequence, 159 residues long: MRCPFCRHEDTQVVDSRVSEDGAAIRRRRRCSACDKRFTTYERVELNLPAVVKKDGSRTEFDRRKIVASMQLALRKRPVAADAIDAAVARIEYQLLATGEREVRSEKLGELVMNELRGLDTIAYVRFASVYRRFEDVSEFADVIEEFRRASPSKPSRKR.

The segment at 3 to 34 (CPFCRHEDTQVVDSRVSEDGAAIRRRRRCSAC) is a zinc-finger region. Residues 49-139 (PAVVKKDGSR…VYRRFEDVSE (91 aa)) form the ATP-cone domain.

It belongs to the NrdR family. It depends on Zn(2+) as a cofactor.

Functionally, negatively regulates transcription of bacterial ribonucleotide reductase nrd genes and operons by binding to NrdR-boxes. The protein is Transcriptional repressor NrdR of Burkholderia ambifaria (strain MC40-6).